Reading from the N-terminus, the 225-residue chain is Uracil-DNA glycosylase (225 aa).

The active-site Proton acceptor is the Asp-61.

Belongs to the uracil-DNA glycosylase (UDG) superfamily. UNG family.

The protein localises to the cytoplasm. It catalyses the reaction Hydrolyzes single-stranded DNA or mismatched double-stranded DNA and polynucleotides, releasing free uracil.. Excises uracil residues from the DNA which can arise as a result of misincorporation of dUMP residues by DNA polymerase or due to deamination of cytosine. This is Uracil-DNA glycosylase from Actinobacillus pleuropneumoniae serotype 5b (strain L20).